Here is a 610-residue protein sequence, read N- to C-terminus: Major facilitator superfamily multidrug transporter FLU1 (610 aa).

Residues Asn-3 and Asn-21 are each glycosylated (N-linked (GlcNAc...) asparagine). A compositionally biased stretch (polar residues) spans 47–58 (GPTDSVESSSNT). The disordered stretch occupies residues 47–74 (GPTDSVESSSNTADEENEINSFNAQNVK). A run of 11 helical transmembrane segments spans residues 165-185 (ILYC…SAMF), 209-229 (LFVF…ELFG), 231-251 (KLVM…VATA), 262-282 (FFAG…MADM), 292-312 (IAIF…LGAF), 323-343 (WTSY…TFLL), 408-428 (AFIY…FLGE), 437-457 (ELPY…IMLF), 478-498 (LEPM…LGWT), 507-527 (WIVP…IFLP), and 530-550 (NYII…NTFI). Asn-568 is a glycosylation site (N-linked (GlcNAc...) asparagine). A helical transmembrane segment spans residues 573–593 (WASTLLGCIGILLLPMPFVFY).

This sequence belongs to the major facilitator superfamily. DHA1 family. Polyamines/proton antiporter (TC 2.A.1.2.16) subfamily.

The protein resides in the cell membrane. Major facilitator superfamily transporter that mediates resistance to structurally and functionally unrelated compounds including cycloheximide but also azoles such as fuconazole, ketoconazole and itraconazole. Also mediates efflux of histatin 5, a salivary human antimicrobial peptide, and is responsible for reduction of its toxicity in C.albicans. In Candida albicans (strain SC5314 / ATCC MYA-2876) (Yeast), this protein is Major facilitator superfamily multidrug transporter FLU1.